The chain runs to 182 residues: CDP-diacylglycerol--glycerol-3-phosphate 3-phosphatidyltransferase (182 aa).

The Cytoplasmic segment spans residues 2–12 (QFNIPTLLTLF). A helical membrane pass occupies residues 13–37 (RVILIPFFVVVFYLPFAWAPMVSAL). Over 38-60 (IFCIAAITDWFDGFLARRWNQST) the chain is Periplasmic. The chain crosses the membrane as a helical span at residues 61 to 81 (RFGAFLDPVADKVLVAIAMVL). Over 82-86 (VTEHY) the chain is Cytoplasmic. Residues 87–107 (HSWWVTLPAATMIAREIIISA) traverse the membrane as a helical segment. Residues 108 to 145 (LREWMAELGKRSSVAVSWIGKVKTTAQMVALAWLLWRP) lie on the Periplasmic side of the membrane. The chain crosses the membrane as a helical span at residues 146–168 (NIWVEYAGIALFFVAAVLTLWSM). At 169–181 (LQYLSAARGDLLD) the chain is on the cytoplasmic side.

This sequence belongs to the CDP-alcohol phosphatidyltransferase class-I family.

Its subcellular location is the cell inner membrane. The catalysed reaction is a CDP-1,2-diacyl-sn-glycerol + sn-glycerol 3-phosphate = a 1,2-diacyl-sn-glycero-3-phospho-(1'-sn-glycero-3'-phosphate) + CMP + H(+). The protein operates within phospholipid metabolism; phosphatidylglycerol biosynthesis; phosphatidylglycerol from CDP-diacylglycerol: step 1/2. Functionally, catalyzes the conversion of cytidine diphosphate diacylglycerol (CDP-DG) and glycerol 3-phosphate into phosphatidylglycerol. Essential for the synthesis of anionic phospholipids, thereby playing a role in balancing the ratio of zwitterionic and anionic phospholipids, which is thought to be important for normal membrane function. This chain is CDP-diacylglycerol--glycerol-3-phosphate 3-phosphatidyltransferase, found in Salmonella paratyphi A (strain ATCC 9150 / SARB42).